A 1059-amino-acid polypeptide reads, in one-letter code: MPKRQDISKILVIGSGPIVIGQAAEFDYSGTQAALSLKEEGYHVILVNSNPATIMTDAEIADKVYIEPLSIDFIERILRKERPDAILPTLGGQTGLNMAKDLSEAGILDELNIELLGTKLSAIEEAEDREEFKALMERLNEPIPESIIATTLEESLNFADTHGYPVIVRPAYTLGGTGGGIAQTHEELSEITANGLELSPVTQVLIERSIAGYKEIEFEVMRDANDNALVVASMENFDPVGIHTGDSIVTAPVQTLSDREVQMMRDAALKIIRALKIEGGVNIQMALDPDSYKYYIIEVNPRVSRSSALASKATGYPIAKMAAKIAVGLTLDEIINPVTGTTKAEFEPALDYVVFKIPRWPFDKFSTADRRLGTQMKATGEVMAIGRNMEEAMLKAVRSLEIGAIGLDDITYKDLSDDELLAALMPARDDRLFMIADLLRRGVSIETIHDKTLINEFFLDKVLHVIEIEQDLASHVGDIDQLQYAKKNGFADETIAKIWGKTAADIRTLRKDKKIKPVYKMVDTVAAEFESATPYYYATYEQENESIISTKKSVLVLGSGPIRIGQGVEFDYATVHAVKAIQRAGYEAIIMNSNPETVSTDFSISDKLYFEPLTLEDVLNVIDLENPVGVVVQFGGQTAINLAQPLLDNGVNILGTSVEDLNRAEDREAFDQVIKELALPQPVGKTATTVDCALAAAQSIGYPVLIRPSYVLGGRAMEIVSSDDELQDYMQRAVKVSNDHPVLIDSYLVGQEAEVDVLSDGETAVIPGIMEHIERAGVHSGDSMSVYPPQYLSQKVQDEMVQASINLAKAMNTIGLMNVQFVIHENTAYVIEVNPRASRTVPFISKVTHLPLAQLATRVMLGEKLSEMGFETGLVPNDDMVHVKAPIFSFTKLPDVDSLLGPEMKSTGEVMGSDINLSKALYKAFIASNIKVPRYGNVLFTVADDDKEEALELAKRFNDLGFALFATAGTGAYLSDNDLPVEVLDKISESDNNAVAALRQQKVQVVINTTQADDRAESDGRLIRNAAIENAVPLFTALDTVSAFLEVLESRSFTVKEMH.

The interval 1 to 401 (MPKRQDISKI…AMLKAVRSLE (401 aa)) is carboxyphosphate synthetic domain. Positions 129, 169, 175, 176, 208, 210, 215, 241, 242, 243, 284, and 298 each coordinate ATP. One can recognise an ATP-grasp 1 domain in the interval 133 to 327 (KALMERLNEP…IAKMAAKIAV (195 aa)). Residues Gln284, Glu298, and Asn300 each contribute to the Mg(2+) site. Positions 284, 298, and 300 each coordinate Mn(2+). Positions 402–546 (IGAIGLDDIT…YATYEQENES (145 aa)) are oligomerization domain. Positions 547–929 (IISTKKSVLV…ALYKAFIASN (383 aa)) are carbamoyl phosphate synthetic domain. The region spanning 671-861 (DQVIKELALP…LAQLATRVML (191 aa)) is the ATP-grasp 2 domain. The ATP site is built by Arg707, Ser746, Leu748, Glu752, Gly777, Val778, His779, Ser780, Gln820, and Glu832. Mg(2+) contacts are provided by Gln820, Glu832, and Asn834. Mn(2+) contacts are provided by Gln820, Glu832, and Asn834. Positions 930 to 1059 (IKVPRYGNVL…SRSFTVKEMH (130 aa)) constitute an MGS-like domain. An allosteric domain region spans residues 930–1059 (IKVPRYGNVL…SRSFTVKEMH (130 aa)).

This sequence belongs to the CarB family. In terms of assembly, composed of two chains; the small (or glutamine) chain promotes the hydrolysis of glutamine to ammonia, which is used by the large (or ammonia) chain to synthesize carbamoyl phosphate. Tetramer of heterodimers (alpha,beta)4. Mg(2+) is required as a cofactor. The cofactor is Mn(2+).

It carries out the reaction hydrogencarbonate + L-glutamine + 2 ATP + H2O = carbamoyl phosphate + L-glutamate + 2 ADP + phosphate + 2 H(+). It catalyses the reaction hydrogencarbonate + NH4(+) + 2 ATP = carbamoyl phosphate + 2 ADP + phosphate + 2 H(+). It functions in the pathway amino-acid biosynthesis; L-arginine biosynthesis; carbamoyl phosphate from bicarbonate: step 1/1. It participates in pyrimidine metabolism; UMP biosynthesis via de novo pathway; (S)-dihydroorotate from bicarbonate: step 1/3. Its function is as follows. Large subunit of the glutamine-dependent carbamoyl phosphate synthetase (CPSase). CPSase catalyzes the formation of carbamoyl phosphate from the ammonia moiety of glutamine, carbonate, and phosphate donated by ATP, constituting the first step of 2 biosynthetic pathways, one leading to arginine and/or urea and the other to pyrimidine nucleotides. The large subunit (synthetase) binds the substrates ammonia (free or transferred from glutamine from the small subunit), hydrogencarbonate and ATP and carries out an ATP-coupled ligase reaction, activating hydrogencarbonate by forming carboxy phosphate which reacts with ammonia to form carbamoyl phosphate. This is Carbamoyl phosphate synthase large chain from Leuconostoc mesenteroides subsp. mesenteroides (strain ATCC 8293 / DSM 20343 / BCRC 11652 / CCM 1803 / JCM 6124 / NCDO 523 / NBRC 100496 / NCIMB 8023 / NCTC 12954 / NRRL B-1118 / 37Y).